We begin with the raw amino-acid sequence, 66 residues long: Small ribosomal subunit protein bS21 (66 aa).

A disordered region spans residues 47-66 (KAQEAARRKRKFARKRMYED). Residues 53–66 (RRKRKFARKRMYED) show a composition bias toward basic residues.

The protein belongs to the bacterial ribosomal protein bS21 family.

The sequence is that of Small ribosomal subunit protein bS21 from Rickettsia bellii (strain RML369-C).